The primary structure comprises 298 residues: MPFVEEEFEILKPTKALFFVRDVLKCSLKEAQRHLDKQRLKQNQQAVRKSQIIQGVVRLIHFKPNEKTQALVFETKDFGVFDKPHQVYTHPKGYFYHESLLDCIQSHFGKNAHPAHRLDYETSGLVLAGKTLQSVKDLKALFMQKKVKKTYLALAHGLVEKSMKIDKPILTPQNIQKDLHIRSKISPLGKQSITLVEPLSYNPFLDISLLKITPLTGRTHQIRLHLSSVDHRIVGEGLYGVADENAREYLQLKRENNAPLLMLHAASLEFEFKGAIYKIASPMPERFMPFLKDLSFFY.

Aspartate 119 is an active-site residue.

This sequence belongs to the pseudouridine synthase RluA family.

It catalyses the reaction a uridine in RNA = a pseudouridine in RNA. This is an uncharacterized protein from Helicobacter pylori (strain ATCC 700392 / 26695) (Campylobacter pylori).